Reading from the N-terminus, the 220-residue chain is Orotidine 5'-phosphate decarboxylase (220 aa).

Substrate is bound by residues D12, K34, 60–69 (DFKVADIPNT), S117, 170–180 (PGVGAQGGKAS), G193, and R194. K62 functions as the Proton donor in the catalytic mechanism.

This sequence belongs to the OMP decarboxylase family. Type 1 subfamily. Homodimer.

The enzyme catalyses orotidine 5'-phosphate + H(+) = UMP + CO2. The protein operates within pyrimidine metabolism; UMP biosynthesis via de novo pathway; UMP from orotate: step 2/2. In terms of biological role, catalyzes the decarboxylation of orotidine 5'-monophosphate (OMP) to uridine 5'-monophosphate (UMP). This chain is Orotidine 5'-phosphate decarboxylase, found in Methanosarcina mazei (strain ATCC BAA-159 / DSM 3647 / Goe1 / Go1 / JCM 11833 / OCM 88) (Methanosarcina frisia).